A 1432-amino-acid chain; its full sequence is ABC transporter B family member 3 (1432 aa).

Disordered stretches follow at residues 1 to 21 and 48 to 149; these read MDDG…EEEI and ITQP…KTEE. 3 stretches are compositionally biased toward low complexity: residues 52 to 62, 76 to 106, and 118 to 135; these read SNNNNNSNNNN, NNNN…FNNN, and NTNE…NNND. Positions 117–163 form a coiled coil; sequence ENTNENNNKNNNNNNNNNDDYNDGADERVKTEEEIKKEAENELNQSV. The ABC transmembrane type-1 1 domain occupies 180-479; that stretch reads MFLGTIAAVI…ASPCLALFAQ (300 aa). Helical transmembrane passes span 185–205, 232–252, 303–323, 325–345, 410–430, and 457–477; these read IAAV…GLVV, LLML…LWMI, KVGR…IGFT, GWQL…GGFF, GLGL…AFWY, and FFAV…LALF. The ABC transporter 1 domain maps to 514-750; it reads IEFKDVGFHY…QGLYFDLVEK (237 aa). Position 549 to 556 (549 to 556) interacts with ATP; that stretch reads GDSGGGKS. The segment at 787-819 is disordered; the sequence is KRSLRKNESESNKKDKEDSNNKKKKKSNKKKVE. Residues 791-807 are compositionally biased toward basic and acidic residues; it reads RKNESESNKKDKEDSNN. The 321-residue stretch at 837–1157 folds into the ABC transmembrane type-1 2 domain; that stretch reads WCFGFLSAVG…ASSFAPDLAK (321 aa). 6 consecutive transmembrane segments (helical) span residues 838–858, 882–902, 968–988, 989–1009, 1060–1080, and 1134–1154; these read CFGF…AMVF, LMFV…GFLF, MVGG…VIIA, CFPL…GFSS, ISGF…CLSF, and VFFA…FAPD. In terms of domain architecture, ABC transporter 2 spans 1192 to 1428; sequence IEFKNLHFSY…EGPYSQLWYN (237 aa). 1227-1234 lines the ATP pocket; the sequence is GDSGGGKS.

The protein belongs to the ABC transporter superfamily. ABCB family. Multidrug resistance exporter (TC 3.A.1.201) subfamily.

The protein resides in the membrane. This Dictyostelium discoideum (Social amoeba) protein is ABC transporter B family member 3 (abcB3).